Here is a 424-residue protein sequence, read N- to C-terminus: Geranylgeranyl pyrophosphate synthase D (424 aa).

A disordered region spans residues proline 42 to asparagine 73. The segment covering serine 58 to alanine 67 has biased composition (polar residues). The isopentenyl diphosphate site is built by lysine 147, arginine 150, and histidine 179. The Mg(2+) site is built by aspartate 186 and aspartate 190. Arginine 195 contacts dimethylallyl diphosphate. Arginine 196 contributes to the isopentenyl diphosphate binding site. Residues lysine 274, threonine 275, glutamine 311, lysine 328, and lysine 338 each contribute to the dimethylallyl diphosphate site.

The protein belongs to the FPP/GGPP synthase family. Mg(2+) serves as cofactor.

The protein localises to the cytoplasm. It catalyses the reaction isopentenyl diphosphate + dimethylallyl diphosphate = (2E)-geranyl diphosphate + diphosphate. The enzyme catalyses isopentenyl diphosphate + (2E)-geranyl diphosphate = (2E,6E)-farnesyl diphosphate + diphosphate. It carries out the reaction isopentenyl diphosphate + (2E,6E)-farnesyl diphosphate = (2E,6E,10E)-geranylgeranyl diphosphate + diphosphate. The protein operates within isoprenoid biosynthesis; farnesyl diphosphate biosynthesis; farnesyl diphosphate from geranyl diphosphate and isopentenyl diphosphate: step 1/1. Its pathway is isoprenoid biosynthesis; geranyl diphosphate biosynthesis; geranyl diphosphate from dimethylallyl diphosphate and isopentenyl diphosphate: step 1/1. It participates in isoprenoid biosynthesis; geranylgeranyl diphosphate biosynthesis; geranylgeranyl diphosphate from farnesyl diphosphate and isopentenyl diphosphate: step 1/1. Functionally, catalyzes the trans-addition of the 3 molecules of isopentenyl diphosphate (IPP) onto dimethylallyl diphosphate (DMAPP) to form geranylgeranyl pyrophosphate (GGDP). This is Geranylgeranyl pyrophosphate synthase D (GGS-D) from Phomopsis amygdali (Fusicoccum amygdali).